Here is a 263-residue protein sequence, read N- to C-terminus: Phosphatidylglycerol--prolipoprotein diacylglyceryl transferase (263 aa).

The next 4 helical transmembrane spans lie at 10–30, 56–76, 91–111, and 117–137; these read VAIT…LFGF, MVTY…ILFY, IWNG…AMWL, and GLGF…GLFF. Residue R139 coordinates a 1,2-diacyl-sn-glycero-3-phospho-(1'-sn-glycerol). A run of 3 helical transmembrane segments spans residues 171–191, 199–219, and 231–251; these read PSQL…LWVF, GHVS…VEFV, and FGWL…GLWL.

It belongs to the Lgt family.

Its subcellular location is the cell inner membrane. It catalyses the reaction L-cysteinyl-[prolipoprotein] + a 1,2-diacyl-sn-glycero-3-phospho-(1'-sn-glycerol) = an S-1,2-diacyl-sn-glyceryl-L-cysteinyl-[prolipoprotein] + sn-glycerol 1-phosphate + H(+). It participates in protein modification; lipoprotein biosynthesis (diacylglyceryl transfer). Functionally, catalyzes the transfer of the diacylglyceryl group from phosphatidylglycerol to the sulfhydryl group of the N-terminal cysteine of a prolipoprotein, the first step in the formation of mature lipoproteins. In Nitratidesulfovibrio vulgaris (strain ATCC 29579 / DSM 644 / CCUG 34227 / NCIMB 8303 / VKM B-1760 / Hildenborough) (Desulfovibrio vulgaris), this protein is Phosphatidylglycerol--prolipoprotein diacylglyceryl transferase.